The following is a 555-amino-acid chain: Potassium-transporting ATPase potassium-binding subunit (555 aa).

10 helical membrane passes run 2–22 (IWVAVVITMLLFILVAKPTGI), 60–80 (QYALSLVLLNGFMIVVVYFIF), 130–150 (IGITFLMFAAPATTLALVMAF), 173–193 (VFLPIAFMAALVFVALGVPQT), 246–266 (MSNILQMMLMMLLPTALPFTY), 278–298 (ILFVSLFMVFLLGFITITTSE), 374–394 (AGFVNIIMYAIIAVFISGLMV), 412–432 (LIAVTILFHPLLILGFSALAL), 483–503 (LVMFLGRYFSLITMLAVAASL), and 525–545 (GIFIGTIVIVGALTFFPMLVL).

This sequence belongs to the KdpA family. As to quaternary structure, the system is composed of three essential subunits: KdpA, KdpB and KdpC.

The protein localises to the cell membrane. In terms of biological role, part of the high-affinity ATP-driven potassium transport (or Kdp) system, which catalyzes the hydrolysis of ATP coupled with the electrogenic transport of potassium into the cytoplasm. This subunit binds the extracellular potassium ions and delivers the ions to the membrane domain of KdpB through an intramembrane tunnel. The chain is Potassium-transporting ATPase potassium-binding subunit from Bacillus cereus (strain Q1).